Reading from the N-terminus, the 89-residue chain is uncharacterized protein (89 aa).

The protein to M.tuberculosis Rv3402c.

This is an uncharacterized protein from Mycobacterium tuberculosis (strain CDC 1551 / Oshkosh).